The primary structure comprises 310 residues: Putative HTH-type transcriptional regulatory protein YN1551_1579 (310 aa).

The HTH cro/C1-type domain maps to 125-180; it reads LKHKREEMGYSIGDVAKFLGVSRKAIYDYEKGDSDVSLEVAEKLIDLFGDDIIGDV. A DNA-binding region (H-T-H motif) is located at residues 136 to 155; the sequence is IGDVAKFLGVSRKAIYDYEK.

The polypeptide is Putative HTH-type transcriptional regulatory protein YN1551_1579 (Saccharolobus islandicus (strain Y.N.15.51 / Yellowstone #2) (Sulfolobus islandicus)).